A 375-amino-acid polypeptide reads, in one-letter code: Succinyl-diaminopimelate desuccinylase (375 aa).

His66 contacts Zn(2+). The active site involves Asp68. Residue Asp99 coordinates Zn(2+). The active-site Proton acceptor is the Glu133. The Zn(2+) site is built by Glu134, Glu162, and His348.

It belongs to the peptidase M20A family. DapE subfamily. As to quaternary structure, homodimer. Zn(2+) is required as a cofactor. The cofactor is Co(2+).

The catalysed reaction is N-succinyl-(2S,6S)-2,6-diaminopimelate + H2O = (2S,6S)-2,6-diaminopimelate + succinate. It functions in the pathway amino-acid biosynthesis; L-lysine biosynthesis via DAP pathway; LL-2,6-diaminopimelate from (S)-tetrahydrodipicolinate (succinylase route): step 3/3. Functionally, catalyzes the hydrolysis of N-succinyl-L,L-diaminopimelic acid (SDAP), forming succinate and LL-2,6-diaminopimelate (DAP), an intermediate involved in the bacterial biosynthesis of lysine and meso-diaminopimelic acid, an essential component of bacterial cell walls. This chain is Succinyl-diaminopimelate desuccinylase, found in Shigella sonnei (strain Ss046).